A 66-amino-acid chain; its full sequence is Large ribosomal subunit protein bL35 (66 aa).

The protein belongs to the bacterial ribosomal protein bL35 family.

This Borrelia garinii subsp. bavariensis (strain ATCC BAA-2496 / DSM 23469 / PBi) (Borreliella bavariensis) protein is Large ribosomal subunit protein bL35.